The primary structure comprises 318 residues: Aspartate carbamoyltransferase catalytic subunit (318 aa).

Carbamoyl phosphate-binding residues include Arg59 and Thr60. Position 87 (Lys87) interacts with L-aspartate. 3 residues coordinate carbamoyl phosphate: Arg109, His137, and Gln140. L-aspartate contacts are provided by Arg170 and Arg224. Carbamoyl phosphate-binding residues include Gly265 and Pro266.

This sequence belongs to the aspartate/ornithine carbamoyltransferase superfamily. ATCase family. As to quaternary structure, heterododecamer (2C3:3R2) of six catalytic PyrB chains organized as two trimers (C3), and six regulatory PyrI chains organized as three dimers (R2).

The enzyme catalyses carbamoyl phosphate + L-aspartate = N-carbamoyl-L-aspartate + phosphate + H(+). Its pathway is pyrimidine metabolism; UMP biosynthesis via de novo pathway; (S)-dihydroorotate from bicarbonate: step 2/3. Catalyzes the condensation of carbamoyl phosphate and aspartate to form carbamoyl aspartate and inorganic phosphate, the committed step in the de novo pyrimidine nucleotide biosynthesis pathway. The chain is Aspartate carbamoyltransferase catalytic subunit from Allorhizobium ampelinum (strain ATCC BAA-846 / DSM 112012 / S4) (Agrobacterium vitis (strain S4)).